Reading from the N-terminus, the 198-residue chain is FMN-dependent NADH:quinone oxidoreductase (198 aa).

FMN-binding positions include 92–95 (MWNL) and 136–139 (SRGG).

This sequence belongs to the azoreductase type 1 family. Homodimer. FMN serves as cofactor.

The enzyme catalyses 2 a quinone + NADH + H(+) = 2 a 1,4-benzosemiquinone + NAD(+). It carries out the reaction N,N-dimethyl-1,4-phenylenediamine + anthranilate + 2 NAD(+) = 2-(4-dimethylaminophenyl)diazenylbenzoate + 2 NADH + 2 H(+). In terms of biological role, quinone reductase that provides resistance to thiol-specific stress caused by electrophilic quinones. Its function is as follows. Also exhibits azoreductase activity. Catalyzes the reductive cleavage of the azo bond in aromatic azo compounds to the corresponding amines. In Clostridium perfringens (strain ATCC 13124 / DSM 756 / JCM 1290 / NCIMB 6125 / NCTC 8237 / Type A), this protein is FMN-dependent NADH:quinone oxidoreductase.